Consider the following 138-residue polypeptide: Large ribosomal subunit protein uL14m (138 aa).

This sequence belongs to the universal ribosomal protein uL14 family. As to quaternary structure, component of the mitochondrial large ribosomal subunit (mt-LSU). Mature yeast 74S mitochondrial ribosomes consist of a small (37S) and a large (54S) subunit. The 37S small subunit contains a 15S ribosomal RNA (15S mt-rRNA) and 34 different proteins. The 54S large subunit contains a 21S rRNA (21S mt-rRNA) and 46 different proteins.

The protein resides in the mitochondrion. Its function is as follows. Component of the mitochondrial ribosome (mitoribosome), a dedicated translation machinery responsible for the synthesis of mitochondrial genome-encoded proteins, including at least some of the essential transmembrane subunits of the mitochondrial respiratory chain. The mitoribosomes are attached to the mitochondrial inner membrane and translation products are cotranslationally integrated into the membrane. This Saccharomyces cerevisiae (strain ATCC 204508 / S288c) (Baker's yeast) protein is Large ribosomal subunit protein uL14m (MRPL38).